Reading from the N-terminus, the 452-residue chain is UDP-glycosyltransferase 76E4 (452 aa).

UDP-alpha-D-glucose is bound by residues T274, 333-335 (APQ), 350-358 (HCGWNSTLE), and 372-375 (QGEQ).

This sequence belongs to the UDP-glycosyltransferase family.

The chain is UDP-glycosyltransferase 76E4 (UGT76E4) from Arabidopsis thaliana (Mouse-ear cress).